Here is a 237-residue protein sequence, read N- to C-terminus: 1-(5-phosphoribosyl)-5-[(5-phosphoribosylamino)methylideneamino] imidazole-4-carboxamide isomerase (237 aa).

Aspartate 8 functions as the Proton acceptor in the catalytic mechanism. The active-site Proton donor is aspartate 130.

It belongs to the HisA/HisF family.

It localises to the cytoplasm. It carries out the reaction 1-(5-phospho-beta-D-ribosyl)-5-[(5-phospho-beta-D-ribosylamino)methylideneamino]imidazole-4-carboxamide = 5-[(5-phospho-1-deoxy-D-ribulos-1-ylimino)methylamino]-1-(5-phospho-beta-D-ribosyl)imidazole-4-carboxamide. The protein operates within amino-acid biosynthesis; L-histidine biosynthesis; L-histidine from 5-phospho-alpha-D-ribose 1-diphosphate: step 4/9. This is 1-(5-phosphoribosyl)-5-[(5-phosphoribosylamino)methylideneamino] imidazole-4-carboxamide isomerase from Caldicellulosiruptor saccharolyticus (strain ATCC 43494 / DSM 8903 / Tp8T 6331).